Reading from the N-terminus, the 98-residue chain is MEIKVTEIRENKLLGRKEIYFDIIHEGEPTPSREAVKGKLAAMLDLDPNTMVLQYIRSYFGSHVSKGYAKAYETRERMLYIEPEYILLRDGLIQKEEE.

The protein belongs to the eukaryotic ribosomal protein eS24 family.

The chain is Small ribosomal subunit protein eS24 from Thermococcus gammatolerans (strain DSM 15229 / JCM 11827 / EJ3).